The sequence spans 248 residues: MLKTRIIPCVLLKNSQLVKSIEFKDFRTIGHLTSTMRIYNARNVDELIILDIDASKSGEIDFESIEDLAKECFMPLTIGGGIKTLEDIQKILNLGADKISINSKALEDMDFISKAGNRFGSQCIVCSIDVKRKGDQFCVYDRGNLLEKSPLELALEYEKKGAGELLLTSVDFEGKAKGYDLELLKIFQNKLKIPLIINGGLSKPSDGVEALNLGADALAGAYIFHFSKYTPKDVKEELARQGFAVRLL.

Residue aspartate 129 is part of the active site.

Belongs to the HisA/HisF family. In terms of assembly, heterodimer of HisH and HisF.

The protein resides in the cytoplasm. It catalyses the reaction 5-[(5-phospho-1-deoxy-D-ribulos-1-ylimino)methylamino]-1-(5-phospho-beta-D-ribosyl)imidazole-4-carboxamide + L-glutamine = D-erythro-1-(imidazol-4-yl)glycerol 3-phosphate + 5-amino-1-(5-phospho-beta-D-ribosyl)imidazole-4-carboxamide + L-glutamate + H(+). It functions in the pathway amino-acid biosynthesis; L-histidine biosynthesis; L-histidine from 5-phospho-alpha-D-ribose 1-diphosphate: step 5/9. Its function is as follows. IGPS catalyzes the conversion of PRFAR and glutamine to IGP, AICAR and glutamate. The HisF subunit catalyzes the cyclization activity that produces IGP and AICAR from PRFAR using the ammonia provided by the HisH subunit. The sequence is that of Putative imidazole glycerol phosphate synthase subunit hisF2 (hisF2) from Campylobacter jejuni subsp. jejuni serotype O:2 (strain ATCC 700819 / NCTC 11168).